A 28-amino-acid polypeptide reads, in one-letter code: Heat shock protein 81 (28 aa).

Asparagine 5 and aspartate 21 together coordinate ATP.

The protein belongs to the heat shock protein 90 family. In terms of assembly, homodimer.

The protein localises to the cytoplasm. Its function is as follows. Putative molecular chaperone that may promote the maturation, structural maintenance and proper regulation of specific target proteins. This is Heat shock protein 81 from Pseudotsuga menziesii (Douglas-fir).